A 128-amino-acid chain; its full sequence is Protein Wnt-2b-B (128 aa).

2 disulfide bridges follow: Cys-3/Cys-16 and Cys-5/Cys-11. Ser-8 carries O-palmitoleoyl serine; by PORCN lipidation. N-linked (GlcNAc...) asparagine glycosylation is present at Asn-48. Disulfide bonds link Cys-90-Cys-105 and Cys-127-Cys-128.

It belongs to the Wnt family. Palmitoleoylation is required for efficient binding to frizzled receptors. Depalmitoleoylation leads to Wnt signaling pathway inhibition.

The protein resides in the secreted. Its subcellular location is the extracellular space. It localises to the extracellular matrix. Its function is as follows. Ligand for members of the frizzled family of seven transmembrane receptors. Functions in the canonical Wnt/beta-catenin signaling pathway. In Xenopus laevis (African clawed frog), this protein is Protein Wnt-2b-B (wnt2b-b).